The sequence spans 285 residues: Pantothenate synthetase (285 aa).

30–37 contacts ATP; the sequence is MGNLHQGH. The active-site Proton donor is the H37. Q61 contacts (R)-pantoate. Q61 is a beta-alanine binding site. Residue 149–152 participates in ATP binding; that stretch reads GQKD. Residue Q155 coordinates (R)-pantoate. ATP is bound by residues V178 and 186–189; that span reads LSSR.

The protein belongs to the pantothenate synthetase family. In terms of assembly, homodimer.

It localises to the cytoplasm. The enzyme catalyses (R)-pantoate + beta-alanine + ATP = (R)-pantothenate + AMP + diphosphate + H(+). Its pathway is cofactor biosynthesis; (R)-pantothenate biosynthesis; (R)-pantothenate from (R)-pantoate and beta-alanine: step 1/1. In terms of biological role, catalyzes the condensation of pantoate with beta-alanine in an ATP-dependent reaction via a pantoyl-adenylate intermediate. This chain is Pantothenate synthetase, found in Aeromonas hydrophila subsp. hydrophila (strain ATCC 7966 / DSM 30187 / BCRC 13018 / CCUG 14551 / JCM 1027 / KCTC 2358 / NCIMB 9240 / NCTC 8049).